A 282-amino-acid chain; its full sequence is MYFKRYLQLAKPGIIFGNLITLTGGFLLATHREIGFEYLPLFVYVMIGVALMIAAGCVFNNIYDKDIDSSMTRTQNRPLVTGDISVIQATIYGTILLILSCLVLYYLVNLLTLWIIIIGFIVYVGIYTVSKRLTIHATVLGGISGAIPPVAGYTAVVNILDYNALALFLILFFWQIPHSYAIAMLYIDDYKKVKLPMLPIVKGIAYTKKIMLFYLALFVVSCALPAVLGSADLFSFIVCMLVALFWMYKSIQSYRTDTDRVFAKTVFKFSIIVITAICLTMG.

The next 9 helical transmembrane spans lie at 9–29, 39–59, 79–99, 102–122, 139–159, 165–185, 210–230, 231–251, and 261–281; these read LAKP…FLLA, LPLF…GCVF, LVTG…LLIL, LVLY…GFIV, VLGG…VVNI, LALF…IAML, IMLF…VLGS, ADLF…YKSI, and VFAK…CLTM.

It belongs to the UbiA prenyltransferase family. Protoheme IX farnesyltransferase subfamily.

The protein resides in the cell inner membrane. It carries out the reaction heme b + (2E,6E)-farnesyl diphosphate + H2O = Fe(II)-heme o + diphosphate. The protein operates within porphyrin-containing compound metabolism; heme O biosynthesis; heme O from protoheme: step 1/1. Its function is as follows. Converts heme B (protoheme IX) to heme O by substitution of the vinyl group on carbon 2 of heme B porphyrin ring with a hydroxyethyl farnesyl side group. The protein is Protoheme IX farnesyltransferase of Francisella tularensis subsp. novicida (strain U112).